The sequence spans 498 residues: WD repeat-containing protein 55 homolog (498 aa).

A disordered region spans residues 1-133; sequence MHTHNNFKTP…TFDLDEDDET (133 aa). 3 stretches are compositionally biased toward acidic residues: residues 12–23, 31–48, and 83–95; these read DEDELDDLDEDM, IEQEVLNESDSDNDEYDL, and SDSDDSMLDDAGD. Positions 114 to 123 are enriched in polar residues; sequence PSGSNRQSEA. WD repeat units follow at residues 155-194, 199-238, 242-280, 283-322, 325-364, and 409-448; these read KLEDFITDICFHPDRDIIALATIIGDVHLYEYDNEANKLL, VHSKACRDVEFTEDGRFLLTCSKDKCVMVTDMETEKLKKL, AHDDAINTLHVLNENLFATGDDAGTVKLWDLRTKNAIFE, ELEDQITQLTTNDQSKLLLATSADGYLTTFNIAARKMYVQ, PYEEELSCMGIYRGDSKLVVGTSKGRLYTYNWGQFGYHCD, and QHNMPIESLDVNSNGELIASSSHNNDVRFWNVKYFEDFGD.

It belongs to the WD repeat WDR55 family.

In Drosophila erecta (Fruit fly), this protein is WD repeat-containing protein 55 homolog.